The sequence spans 595 residues: Arginine--tRNA ligase (595 aa).

The 'HIGH' region signature appears at 132–142 (ANPTGPLHVGH).

The protein belongs to the class-I aminoacyl-tRNA synthetase family. Monomer.

It is found in the cytoplasm. The enzyme catalyses tRNA(Arg) + L-arginine + ATP = L-arginyl-tRNA(Arg) + AMP + diphosphate. The polypeptide is Arginine--tRNA ligase (Cupriavidus taiwanensis (strain DSM 17343 / BCRC 17206 / CCUG 44338 / CIP 107171 / LMG 19424 / R1) (Ralstonia taiwanensis (strain LMG 19424))).